The chain runs to 216 residues: Fucoxanthin-chlorophyll a-c binding protein C, chloroplastic (216 aa).

Residues 1–38 constitute a chloroplast transit peptide; the sequence is MKSAIMAVASAAPGLRGPSAFNGAALTTSAKSSSAMKM. The next 3 membrane-spanning stretches (helical) occupy residues 80 to 100, 121 to 141, and 182 to 202; these read IAML…PGML, IPPG…LAVM, and GRAA…NNKP.

Belongs to the fucoxanthin chlorophyll protein family. In terms of assembly, the LHC complex of chromophytic algae is composed of fucoxanthin, chlorophyll A and C bound non-covalently by fucoxanthin chlorophyll proteins (FCPs). The ratio of pigments in this LHC is; fucoxanthin: chlorophyll C: chlorophyll A; (0.6-1): (0.1-0.3): (1).

Its subcellular location is the plastid. The protein resides in the chloroplast thylakoid membrane. Its function is as follows. The light-harvesting complex (LHC) functions as a light receptor, it captures and delivers excitation energy to photosystems with which it is closely associated. Energy is transferred from the carotenoid and chlorophyll C (or B) to chlorophyll A and the photosynthetic reaction centers where it is used to synthesize ATP and reducing power. This chain is Fucoxanthin-chlorophyll a-c binding protein C, chloroplastic (FCPC), found in Macrocystis pyrifera (Giant kelp).